Here is a 240-residue protein sequence, read N- to C-terminus: MRPNNRAVNEPRPIKITRHYTKHAEGSVLVEFGDTKVICTATVEDSVPRFLKGQGQGWVTAEYGMLPRSTHSRMLREAAKGKQGGRTMEIQRLIARSLRAMVDLTALGERSITLDCDVIQADGGTRTASITGACVALTDAINALVENGTLKTSPLKGLVAAVSVGIVNGEAVCDLEYVEDSAAETDMNVVMMEDGRMIEVQGTAEGEPFSHEELLTLLNLAKQGCNMIFDAQRRALAADC.

Residues arginine 86 and 124–126 (GTR) each bind phosphate.

The protein belongs to the RNase PH family. Homohexameric ring arranged as a trimer of dimers.

It carries out the reaction tRNA(n+1) + phosphate = tRNA(n) + a ribonucleoside 5'-diphosphate. Functionally, phosphorolytic 3'-5' exoribonuclease that plays an important role in tRNA 3'-end maturation. Removes nucleotide residues following the 3'-CCA terminus of tRNAs; can also add nucleotides to the ends of RNA molecules by using nucleoside diphosphates as substrates, but this may not be physiologically important. Probably plays a role in initiation of 16S rRNA degradation (leading to ribosome degradation) during starvation. This is Ribonuclease PH from Mannheimia succiniciproducens (strain KCTC 0769BP / MBEL55E).